An 898-amino-acid polypeptide reads, in one-letter code: Serine/threonine-protein kinase TAO3 (898 aa).

The 254-residue stretch at 24 to 277 folds into the Protein kinase domain; the sequence is FIDLHEIGHG…AVELLRHDFI (254 aa). Residues 30-38 and lysine 53 each bind ATP; that span reads IGHGSFGAV. The active-site Proton acceptor is the aspartate 147. Disordered regions lie at residues 316 to 375 and 405 to 424; these read TRNG…DESS and DEAGHGDPRPEPRPTQSVQS. Serine 324 bears the Phosphoserine; by ATM mark. Phosphoserine is present on residues serine 343, serine 346, and serine 349. Low complexity predominate over residues 349–366; the sequence is SIPSTSVSTGSRSSSVNS. Threonine 357 bears the Phosphothreonine mark. Position 359 is a phosphoserine (serine 359). Residues 405 to 416 are compositionally biased toward basic and acidic residues; sequence DEAGHGDPRPEP. Serine 442 bears the Phosphoserine mark. 3 coiled-coil regions span residues 452 to 502, 548 to 649, and 754 to 871; these read EQEN…THAN, FLES…HAML, and LKTL…QERE. The tract at residues 565–596 is disordered; that stretch reads EEMNEDHSTPKKEKQERISKHKENLQHTQAEE. Lysine 830 is modified (N6-acetyllysine).

The protein belongs to the protein kinase superfamily. STE Ser/Thr protein kinase family. STE20 subfamily. Self-associates. Interacts with ERN1 and TRAF2. Interaction with TRAF2 is facilitated under ER stress conditions, such as treatment with tunicamycin, and may promote TRAF2 phosphorylation. Interacts (via N-terminus) with STK25; the interaction promotes STK25 abundance at the level of protein expression and/or stability. Autophosphorylated. Phosphorylation at Ser-324 by ATM following DNA damage is required for activation of the p38/MAPK14 stress-activated MAPK cascade. Phosphorylated at Ser-324 and on Tyr residues during T cell activation. Phosphorylated by LRRK2.

It localises to the cytoplasm. It is found in the cell membrane. Its subcellular location is the membrane raft. The protein resides in the lipid droplet. It catalyses the reaction L-seryl-[protein] + ATP = O-phospho-L-seryl-[protein] + ADP + H(+). The enzyme catalyses L-threonyl-[protein] + ATP = O-phospho-L-threonyl-[protein] + ADP + H(+). Its function is as follows. Serine/threonine-protein kinase that acts as a regulator of the p38/MAPK14 stress-activated MAPK cascade and of the MAPK8/JNK cascade. In response to DNA damage, involved in the G2/M transition DNA damage checkpoint by activating the p38/MAPK14 stress-activated MAPK cascade, probably by mediating phosphorylation of upstream MAP2K3 and MAP2K6 kinases. Inhibits basal activity of the MAPK8/JNK cascade and diminishes its activation in response to epidermal growth factor (EGF). Positively regulates canonical T cell receptor (TCR) signaling by preventing early PTPN6/SHP1-mediated inactivation of LCK, ensuring sustained TCR signaling that is required for optimal activation and differentiation of T cells. Phosphorylates PTPN6/SHP1 on 'Thr-394', leading to its polyubiquitination and subsequent proteasomal degradation. Required for cell surface expression of metalloprotease ADAM10 on type 1 transitional B cells which is necessary for their NOTCH-mediated development into marginal zone B cells. Also required for the NOTCH-mediated terminal differentiation of splenic conventional type 2 dendritic cells. Positively regulates osteoblast differentiation by acting as an upstream activator of the JNK pathway. Promotes JNK signaling in hepatocytes and positively regulates hepatocyte lipid storage by inhibiting beta-oxidation and triacylglycerol secretion while enhancing lipid synthesis. Restricts age-associated inflammation by negatively regulating differentiation of macrophages and their production of pro-inflammatory cytokines. Plays a role in negatively regulating the abundance of regulatory T cells in white adipose tissue. This chain is Serine/threonine-protein kinase TAO3 (Taok3), found in Mus musculus (Mouse).